Consider the following 494-residue polypeptide: Probable capsid protein (494 aa).

The short motif at 120 to 123 (RPKR) is the Nuclear localization signal element. The CCHC-type zinc finger occupies 418–435 (CRCWVCNIEGHYANECPN). Positions 474–494 (LSSSDSELDDTCEESSSEESE) are disordered. Positions 479–494 (SELDDTCEESSSEESE) are enriched in acidic residues.

This sequence belongs to the caulimoviridae capsid protein family. In terms of assembly, interacts (via nuclear localization signal) with host importin alpha.

It is found in the virion. Its subcellular location is the host nucleus. Self assembles to form an icosahedral capsid, about 50 nm in diameter, nm, composed of 420 subunits of the viral capsid protein. The capsid encapsulates the genomic dsDNA. Following virus entry into host cell, provides nuclear import of the viral genome. Virus particles do not enter the nucleus, but dock at the nuclear membrane through the interaction with host importins. The sequence is that of Probable capsid protein from Dianthus caryophyllus (Carnation).